A 108-amino-acid chain; its full sequence is Tubulin-specific chaperone A (108 aa).

An N-acetylalanine modification is found at Ala2.

It belongs to the TBCA family. As to quaternary structure, supercomplex made of cofactors A to E. Cofactors A and D function by capturing and stabilizing tubulin in a quasi-native conformation. Cofactor E binds to the cofactor D-tubulin complex; interaction with cofactor C then causes the release of tubulin polypeptides that are committed to the native state.

It is found in the cytoplasm. The protein resides in the cytoskeleton. Tubulin-folding protein; involved in the early step of the tubulin folding pathway. The chain is Tubulin-specific chaperone A (Tbca) from Rattus norvegicus (Rat).